Reading from the N-terminus, the 520-residue chain is Probable cytochrome P450 4p2 (520 aa).

Positions 325 and 464 each coordinate heme.

This sequence belongs to the cytochrome P450 family. Heme is required as a cofactor.

The protein localises to the endoplasmic reticulum membrane. It is found in the microsome membrane. Functionally, may be involved in the metabolism of insect hormones and in the breakdown of synthetic insecticides. This Drosophila melanogaster (Fruit fly) protein is Probable cytochrome P450 4p2 (Cyp4p2).